Reading from the N-terminus, the 453-residue chain is Allantoinase (453 aa).

6 residues coordinate Zn(2+): His59, His61, Lys146, His186, His242, and Asp315. Lys146 is subject to N6-carboxylysine.

Belongs to the metallo-dependent hydrolases superfamily. Allantoinase family. Homotetramer. Zn(2+) is required as a cofactor. In terms of processing, carboxylation allows a single lysine to coordinate two zinc ions.

It carries out the reaction (S)-allantoin + H2O = allantoate + H(+). The protein operates within nitrogen metabolism; (S)-allantoin degradation; allantoate from (S)-allantoin: step 1/1. In terms of biological role, catalyzes the conversion of allantoin (5-ureidohydantoin) to allantoic acid by hydrolytic cleavage of the five-member hydantoin ring. The chain is Allantoinase from Salmonella gallinarum (strain 287/91 / NCTC 13346).